Here is a 120-residue protein sequence, read N- to C-terminus: UPF0231 protein ETA_08290 (120 aa).

This sequence belongs to the UPF0231 family.

In Erwinia tasmaniensis (strain DSM 17950 / CFBP 7177 / CIP 109463 / NCPPB 4357 / Et1/99), this protein is UPF0231 protein ETA_08290.